A 289-amino-acid polypeptide reads, in one-letter code: Acetyl-coenzyme A carboxylase carboxyl transferase subunit beta (289 aa).

A CoA carboxyltransferase N-terminal domain is found at 28-289 (LWSKCPSCEA…ALLQKLPAAA (262 aa)). Cysteine 32, cysteine 35, cysteine 51, and cysteine 54 together coordinate Zn(2+). The C4-type zinc finger occupies 32 to 54 (CPSCEAVLYATDLENNLQVCPKC).

It belongs to the AccD/PCCB family. As to quaternary structure, acetyl-CoA carboxylase is a heterohexamer composed of biotin carboxyl carrier protein (AccB), biotin carboxylase (AccC) and two subunits each of ACCase subunit alpha (AccA) and ACCase subunit beta (AccD). Zn(2+) serves as cofactor.

It localises to the cytoplasm. It carries out the reaction N(6)-carboxybiotinyl-L-lysyl-[protein] + acetyl-CoA = N(6)-biotinyl-L-lysyl-[protein] + malonyl-CoA. It participates in lipid metabolism; malonyl-CoA biosynthesis; malonyl-CoA from acetyl-CoA: step 1/1. Its function is as follows. Component of the acetyl coenzyme A carboxylase (ACC) complex. Biotin carboxylase (BC) catalyzes the carboxylation of biotin on its carrier protein (BCCP) and then the CO(2) group is transferred by the transcarboxylase to acetyl-CoA to form malonyl-CoA. This Dechloromonas aromatica (strain RCB) protein is Acetyl-coenzyme A carboxylase carboxyl transferase subunit beta.